A 454-amino-acid chain; its full sequence is Cysteine--tRNA ligase (454 aa).

C27 contacts Zn(2+). The 'HIGH' region motif lies at 29 to 39 (PTVQDHFHIGH). Zn(2+)-binding residues include D207, H232, and E236. The short motif at 265–269 (KMSKS) is the 'KMSKS' region element. An ATP-binding site is contributed by K268.

The protein belongs to the class-I aminoacyl-tRNA synthetase family. Zn(2+) is required as a cofactor.

It is found in the cytoplasm. It catalyses the reaction tRNA(Cys) + L-cysteine + ATP = L-cysteinyl-tRNA(Cys) + AMP + diphosphate. This Thermoplasma volcanium (strain ATCC 51530 / DSM 4299 / JCM 9571 / NBRC 15438 / GSS1) protein is Cysteine--tRNA ligase.